The following is a 565-amino-acid chain: Deformed epidermal autoregulatory factor 1 homolog (565 aa).

Disordered regions lie at residues 34-62 and 162-190; these read GGEA…ETPR and GLKG…KGGT. The segment covering 169 to 181 has biased composition (pro residues); the sequence is PLTPGPQSPPTPL. Threonine 171 bears the Phosphothreonine mark. Serine 176 carries the post-translational modification Phosphoserine. Threonine 179 carries the phosphothreonine modification. In terms of domain architecture, SAND spans 193 to 273; sequence NWDPSVYDSE…QCLIQDGILN (81 aa). The short motif at 301-316 is the Nuclear localization signal element; that stretch reads KRRKKENELPTTPVKK. An interaction with LMO4 region spans residues 403-478; sequence IAPFPEAALP…QLKTLFEQAK (76 aa). Threonine 432 is modified (phosphothreonine). A Phosphoserine modification is found at serine 448. Cysteine 504, cysteine 507, cysteine 515, cysteine 518, cysteine 524, cysteine 528, histidine 536, and cysteine 540 together coordinate Zn(2+). An MYND-type zinc finger spans residues 504–540; the sequence is CVNCGREAMSECTGCHKVNYCSTFCQRKDWKDHQHIC.

As to quaternary structure, homodimer. Isoform 1 and isoform 4 may form a heterodimer. Interacts with LMO2 and CLIM2. Interacts with LMO4; LMO4 blocks export from nucleus. May interact with the corepressors NCOR1 and NCRO2. Identified in a complex with the XRCC5 and XRCC6 heterodimer. Interacts (via the SAND domain) with the DNA-PK complex subunit XRCC6; the interaction is direct and may be inhibited by DNA-binding. In terms of processing, may be phosphorylated by DNA-PK complex in a DNA independent manner (in vitro). As to expression, expressed in various tissues and cells such as in peripheral mononuclear cells and hormone-secreting pituitary cells. Expression in pancreatic lymph nodes of patients with type 1 diabetes is 20 times higher than in healthy controls. Highly expressed in fetal and adult brain.

Its subcellular location is the nucleus. The protein resides in the cytoplasm. It is found in the secreted. Its function is as follows. Transcription factor that binds to sequence with multiple copies of 5'-TTC[CG]G-3' present in its own promoter and that of the HNRPA2B1 gene. Down-regulates transcription of these genes. Binds to the retinoic acid response element (RARE) 5'-AGGGTTCACCGAAAGTTCA-3'. Activates the proenkephalin gene independently of promoter binding, probably through protein-protein interaction. When secreted, behaves as an inhibitor of cell proliferation, by arresting cells in the G0 or G1 phase. Required for neural tube closure and skeletal patterning. Regulates epithelial cell proliferation and side-branching in the mammary gland. Controls the expression of peripheral tissue antigens in pancreatic lymph nodes. Isoform 1 displays greater transcriptional activity than isoform 4. Isoform 4 may inhibit transcriptional activity of isoform 1 by interacting with isoform 1 and retaining it in the cytoplasm. Transcriptional activator of EIF4G3. This Homo sapiens (Human) protein is Deformed epidermal autoregulatory factor 1 homolog (DEAF1).